Reading from the N-terminus, the 169-residue chain is Lipoprotein signal peptidase (169 aa).

The next 2 helical transmembrane spans lie at 56–76 and 84–104; these read FLPPGVLLILTTIIVSGVIIY and QPLFLGSFGLIAGGGIGNLID. Active-site residues include Asp113 and Asp139. A helical membrane pass occupies residues 132–152; it reads WPIFNIADSAITIGACMLIIF.

It belongs to the peptidase A8 family.

Its subcellular location is the cell inner membrane. It carries out the reaction Release of signal peptides from bacterial membrane prolipoproteins. Hydrolyzes -Xaa-Yaa-Zaa-|-(S,diacylglyceryl)Cys-, in which Xaa is hydrophobic (preferably Leu), and Yaa (Ala or Ser) and Zaa (Gly or Ala) have small, neutral side chains.. Its pathway is protein modification; lipoprotein biosynthesis (signal peptide cleavage). Its function is as follows. This protein specifically catalyzes the removal of signal peptides from prolipoproteins. The sequence is that of Lipoprotein signal peptidase from Chlorobium phaeovibrioides (strain DSM 265 / 1930) (Prosthecochloris vibrioformis (strain DSM 265)).